The following is a 579-amino-acid chain: MAVFNQKSVSDMIKEFRKNWRALCNSERTTLCGADSMLLALQLSMAENNKQHSGEFTVSLSDVLLTWKYLLHEKLNLPVENMDVTDHYEDVRKIYDDFLKNSNMLDLIDVYQKCRALTSNCENYNTVSPSQLLDFLSGKQYAVGDETDLSIPTSPTSKYNRDNEKVQLLARKIIFSYLNLLVNSKNDLAVAYILNIPDRGLGREAFTDLKHAAREKQMSIFLVATSFIRTIELGGKGYAPPPSDPLRTHVKGLSNFINFIDKLDEILGEIPNPSIAGGQILSVIKMQLIKGQNSRDPFCKAIEEVAQDLDLRIKNIINSQEGVVALSTTDISPARPKSHAINHGTAYCGRDTVKALLVLLDEEAANAPTKNKAELLYDEENTIHHHGTSILTLFRSPTQVNNSIKPLRERICVSMQEKKIKMKQTLIRSQFACTYKDDYMISKDNWNNVNLASKPLCVLYMENDLSEGVNPSVGRSTIGTSFGNVHLDRSKNEKVSRKSTSQTGNKSSKRKQVDLDGENILCDNRNEPPQHKNAKIPKKSNDSQNRLYGKLAKVAKSNKCTAKDKLISGQAKLTQFFRL.

The interval 480–543 is disordered; that stretch reads TSFGNVHLDR…AKIPKKSNDS (64 aa). Over residues 486-496 the composition is skewed to basic and acidic residues; that stretch reads HLDRSKNEKVS.

This sequence belongs to the PARI family. In terms of assembly, interacts with RAD51 and PCNA. Interacts with PARP1. Interacts with TASOR. Restricted to testis. Overexpressed in multiple cancer cells.

It is found in the cytoplasm. It localises to the nucleus. Functionally, required to suppress inappropriate homologous recombination, thereby playing a central role DNA repair and in the maintenance of genomic stability. Antagonizes homologous recombination by interfering with the formation of the RAD51-DNA homologous recombination structure. Binds single-strand DNA and poly(A) homopolymers. Positively regulate the poly(ADP-ribosyl)ation activity of PARP1; however such function may be indirect. The sequence is that of PCNA-interacting partner (PARPBP) from Homo sapiens (Human).